A 281-amino-acid chain; its full sequence is Fibrinogen-like protein 1-like protein (281 aa).

The first 33 residues, 1–33 (MGLQAGTRQLHGNLILLPVAVVMLLLCTSPVCA), serve as a signal peptide directing secretion. The region spanning 34–246 (TASVGLPADC…RPSSWSNPPM (213 aa)) is the Fibrinogen C-terminal domain. 2 disulfide bridges follow: C43–C69 and C201–C213. A compositionally biased stretch (low complexity) spans 260–269 (PSRSPSLPSP). The interval 260–281 (PSRSPSLPSPITATHTVRNQLQ) is disordered. The segment covering 270–281 (ITATHTVRNQLQ) has biased composition (polar residues).

Expressed in smal intestine, colon and lung.

Its function is as follows. Shows a cytidine deaminase activity on 2'-deoxycytidine (in vitro), however shows no RNA editing activity (in vitro). The sequence is that of Fibrinogen-like protein 1-like protein from Gallus gallus (Chicken).